The following is a 447-amino-acid chain: ATP-dependent protease ATPase subunit HslU (447 aa).

Residues Ile-18, Gly-60–Glu-65, Asp-260, Glu-325, and Arg-397 contribute to the ATP site.

It belongs to the ClpX chaperone family. HslU subfamily. In terms of assembly, a double ring-shaped homohexamer of HslV is capped on each side by a ring-shaped HslU homohexamer. The assembly of the HslU/HslV complex is dependent on binding of ATP.

It is found in the cytoplasm. ATPase subunit of a proteasome-like degradation complex; this subunit has chaperone activity. The binding of ATP and its subsequent hydrolysis by HslU are essential for unfolding of protein substrates subsequently hydrolyzed by HslV. HslU recognizes the N-terminal part of its protein substrates and unfolds these before they are guided to HslV for hydrolysis. This chain is ATP-dependent protease ATPase subunit HslU, found in Paraburkholderia phymatum (strain DSM 17167 / CIP 108236 / LMG 21445 / STM815) (Burkholderia phymatum).